We begin with the raw amino-acid sequence, 407 residues long: Accessory Sec system protein translocase subunit SecY2 (407 aa).

Transmembrane regions (helical) follow at residues 13-33 (FLWT…TLPF), 65-85 (FFSI…MFTV), 104-124 (MLLT…NLPL), 133-153 (GTIV…LIWL), 158-178 (SSMG…SYIP), 192-212 (PLIL…AVLV), 248-268 (IMYA…LLFF), 287-307 (IPWF…FAFI), 345-365 (FAFV…LLIF), and 370-390 (YMRL…VFSI).

It belongs to the SecY/SEC61-alpha family. SecY2 subfamily. May form heterotrimers with SecE and SecG subunits (Potential). Component of the accessory SecA2/SecY2 protein translocase complex required to export cell wall protein GspB.

It localises to the cell membrane. In terms of biological role, the central subunit of a protein translocation channel (Potential). Part of the accessory SecA2/SecY2 system specifically required to export GspB, a serine-rich repeat cell wall protein encoded upstream in the same operon. The protein is Accessory Sec system protein translocase subunit SecY2 of Streptococcus gordonii.